The following is a 283-amino-acid chain: Bifunctional protein FolD (283 aa).

NADP(+)-binding positions include 163-165, S188, and I229; that span reads GRS.

Belongs to the tetrahydrofolate dehydrogenase/cyclohydrolase family. In terms of assembly, homodimer.

It carries out the reaction (6R)-5,10-methylene-5,6,7,8-tetrahydrofolate + NADP(+) = (6R)-5,10-methenyltetrahydrofolate + NADPH. The catalysed reaction is (6R)-5,10-methenyltetrahydrofolate + H2O = (6R)-10-formyltetrahydrofolate + H(+). It functions in the pathway one-carbon metabolism; tetrahydrofolate interconversion. Its function is as follows. Catalyzes the oxidation of 5,10-methylenetetrahydrofolate to 5,10-methenyltetrahydrofolate and then the hydrolysis of 5,10-methenyltetrahydrofolate to 10-formyltetrahydrofolate. The chain is Bifunctional protein FolD from Campylobacter fetus subsp. fetus (strain 82-40).